Reading from the N-terminus, the 292-residue chain is Acidic endochitinase (292 aa).

The N-terminal stretch at 1 to 25 is a signal peptide; it reads MAAHKITTTLSIFFLLSSIFRSSDA. The 267-residue stretch at 26–292 folds into the GH18 domain; sequence AGIAIYWGQN…YSDSIKGSIG (267 aa). 2 disulfide bridges follow: Cys-45-Cys-92 and Cys-75-Cys-82. Residue Glu-152 is the Proton donor of the active site. An intrachain disulfide couples Cys-180 to Cys-209.

Belongs to the glycosyl hydrolase 18 family. Chitinase class II subfamily.

Its subcellular location is the secreted. The protein localises to the extracellular space. It carries out the reaction Random endo-hydrolysis of N-acetyl-beta-D-glucosaminide (1-&gt;4)-beta-linkages in chitin and chitodextrins.. Functionally, this protein functions as a defense against chitin containing fungal pathogens. This Cucumis sativus (Cucumber) protein is Acidic endochitinase.